Here is a 29-residue protein sequence, read N- to C-terminus: uncharacterized protein (29 aa).

It is found in the plastid. The protein localises to the chloroplast. This is an uncharacterized protein from Trieres chinensis (Marine centric diatom).